The sequence spans 316 residues: tRNA methyltransferase 10 homolog B (316 aa).

A coiled-coil region spans residues 73 to 97 (EKIVAAKKSKRKQEKERRKANRAEN). A disordered region spans residues 77-98 (AAKKSKRKQEKERRKANRAENP). The SAM-dependent MTase TRM10-type domain occupies 113 to 310 (TKDKLLEAKH…KGVSSGKGYI (198 aa)).

Belongs to the class IV-like SAM-binding methyltransferase superfamily. TRM10 family.

The enzyme catalyses guanosine(9) in tRNA + S-adenosyl-L-methionine = N(1)-methylguanosine(9) in tRNA + S-adenosyl-L-homocysteine + H(+). In terms of biological role, S-adenosyl-L-methionine-dependent guanine N(1)-methyltransferase that catalyzes the formation of N(1)-methylguanine at position 9 (m1G9) in tRNAs. Probably not able to catalyze formation of N(1)-methyladenine at position 9 (m1A9) in tRNAs. The protein is tRNA methyltransferase 10 homolog B (TRMT10B) of Homo sapiens (Human).